We begin with the raw amino-acid sequence, 645 residues long: UvrABC system protein C (645 aa).

Positions 12–91 constitute a GIY-YIG domain; it reads TGPGVYLYKN…IKQRKPRFNV (80 aa). The 36-residue stretch at 202–237 folds into the UVR domain; sequence ADLERSLEVRMQEAAAAEQFELAAKYRDLLVTLHQL.

It belongs to the UvrC family. Interacts with UvrB in an incision complex.

It localises to the cytoplasm. In terms of biological role, the UvrABC repair system catalyzes the recognition and processing of DNA lesions. UvrC both incises the 5' and 3' sides of the lesion. The N-terminal half is responsible for the 3' incision and the C-terminal half is responsible for the 5' incision. The protein is UvrABC system protein C of Acidobacterium capsulatum (strain ATCC 51196 / DSM 11244 / BCRC 80197 / JCM 7670 / NBRC 15755 / NCIMB 13165 / 161).